Reading from the N-terminus, the 139-residue chain is Protein PsiE homolog (139 aa).

The next 4 membrane-spanning stretches (helical) occupy residues Ile-20–Ile-40, Ala-60–Phe-80, His-85–Val-105, and Val-111–Leu-131.

Belongs to the PsiE family.

It is found in the cell inner membrane. This chain is Protein PsiE homolog, found in Haemophilus influenzae (strain 86-028NP).